Here is a 151-residue protein sequence, read N- to C-terminus: UPF0178 protein amb2838 (151 aa).

The protein belongs to the UPF0178 family.

This is UPF0178 protein amb2838 from Paramagnetospirillum magneticum (strain ATCC 700264 / AMB-1) (Magnetospirillum magneticum).